A 497-amino-acid chain; its full sequence is MLNIATDEICSLIRYRIQNYNSELKLNNVGVVFKVGDGIVRVFGLQGAMAGELLLFEEGSVGIAFNLEKNNIGVVLLGDCTLIQEGMIVKGTGKIGEVPVGDKFLGRIVDSLANPIDGKGDIVSSQTRLIEPPAPGIVDRRSVYEPLQTGITAIDAMIPIGRGQRELIIGDRQTGKTAVAIDTILNQKGKDVKCVYVAVGQKSSSIAQVVTTLQDKGALDYTILVSAAADTTATMQYIAPYSGTALAEYFMYNGSHALVVYDDLSKQAQAYREMSLLLRRPPGREAYPGDVFYLHSRLLERAAKLSDSLGGGSLTALPIVETQEGDVSAYIPTNVISITDGQIFLSSDIFNAGFRPAINVGISVSRVGSAAQPKAMKRVAGKLKLELAQFAELEAFSQFASDLDQATQNQLARGKRLREILKQPQYSPLSLENQVGIIFAGTNGYLDKVSIENIPSYITSLTESLKNEKSKFGDVILSTKDFTKDEENVLRNILEAS.

170–177 (GDRQTGKT) is an ATP binding site.

It belongs to the ATPase alpha/beta chains family. F-type ATPases have 2 components, CF(1) - the catalytic core - and CF(0) - the membrane proton channel. CF(1) has five subunits: alpha(3), beta(3), gamma(1), delta(1), epsilon(1). CF(0) has four main subunits: a, b, b' and c.

Its subcellular location is the plastid. The protein localises to the chloroplast thylakoid membrane. It carries out the reaction ATP + H2O + 4 H(+)(in) = ADP + phosphate + 5 H(+)(out). Its function is as follows. Produces ATP from ADP in the presence of a proton gradient across the membrane. The alpha chain is a regulatory subunit. This is ATP synthase subunit alpha, chloroplastic from Bigelowiella natans (Pedinomonas minutissima).